Consider the following 238-residue polypeptide: Ribosomal RNA small subunit methyltransferase G (238 aa).

S-adenosyl-L-methionine is bound by residues Gly78, Phe83, 129-130 (AE), and Arg148. Positions 217–238 (KKKETPKKYPRKAGTPAKSPIK) are disordered.

This sequence belongs to the methyltransferase superfamily. RNA methyltransferase RsmG family.

The protein localises to the cytoplasm. In terms of biological role, specifically methylates the N7 position of a guanine in 16S rRNA. This is Ribosomal RNA small subunit methyltransferase G from Lactococcus lactis subsp. cremoris (strain SK11).